The primary structure comprises 235 residues: Small ribosomal subunit protein uS5 (235 aa).

In terms of domain architecture, S5 DRBM spans 60-123; it reads ENQEVLDIAL…NYAKMNIIEI (64 aa). Cys-127, Cys-132, Cys-134, and His-138 together coordinate Zn(2+).

It belongs to the universal ribosomal protein uS5 family. Part of the 30S ribosomal subunit. Contacts protein S4. The cofactor is Zn(2+).

In terms of biological role, with S4 and S12 plays an important role in translational accuracy. This Thermococcus kodakarensis (strain ATCC BAA-918 / JCM 12380 / KOD1) (Pyrococcus kodakaraensis (strain KOD1)) protein is Small ribosomal subunit protein uS5.